The sequence spans 106 residues: Large ribosomal subunit protein eL42 (106 aa).

A disordered region spans residues 34–53 (YAQGKRRYDRKQSGYGGQTK).

Belongs to the eukaryotic ribosomal protein eL42 family. Component of the large ribosomal subunit.

The protein resides in the cytoplasm. Its function is as follows. Component of the large ribosomal subunit. The ribosome is a large ribonucleoprotein complex responsible for the synthesis of proteins in the cell. This Canis lupus familiaris (Dog) protein is Large ribosomal subunit protein eL42 (Rpl36a).